We begin with the raw amino-acid sequence, 141 residues long: Nucleoside diphosphate kinase (141 aa).

Positions 11, 59, 87, 93, 104, and 114 each coordinate ATP. Catalysis depends on H117, which acts as the Pros-phosphohistidine intermediate.

The protein belongs to the NDK family. As to quaternary structure, homotetramer. Requires Mg(2+) as cofactor.

It localises to the cytoplasm. The enzyme catalyses a 2'-deoxyribonucleoside 5'-diphosphate + ATP = a 2'-deoxyribonucleoside 5'-triphosphate + ADP. It carries out the reaction a ribonucleoside 5'-diphosphate + ATP = a ribonucleoside 5'-triphosphate + ADP. Functionally, major role in the synthesis of nucleoside triphosphates other than ATP. The ATP gamma phosphate is transferred to the NDP beta phosphate via a ping-pong mechanism, using a phosphorylated active-site intermediate. The chain is Nucleoside diphosphate kinase from Haemophilus influenzae (strain 86-028NP).